The sequence spans 109 residues: MQAIHNDKSLLSPFSELNTDNRTKREESGNAFKEQKGGEFSKLLKQSINELNNTQEQSDKALADMATGQIKDLHQAAIAIGKAETSMKLMLEVRNKAISAYKELLRTQI.

Residues 1–38 are disordered; it reads MQAIHNDKSLLSPFSELNTDNRTKREESGNAFKEQKGG. Residues 19 to 38 are compositionally biased toward basic and acidic residues; sequence TDNRTKREESGNAFKEQKGG.

It belongs to the FliE family.

It localises to the bacterial flagellum basal body. In Helicobacter pylori (strain G27), this protein is Flagellar hook-basal body complex protein FliE.